We begin with the raw amino-acid sequence, 294 residues long: Glycine--tRNA ligase alpha subunit (294 aa).

This sequence belongs to the class-II aminoacyl-tRNA synthetase family. As to quaternary structure, tetramer of two alpha and two beta subunits.

It localises to the cytoplasm. It carries out the reaction tRNA(Gly) + glycine + ATP = glycyl-tRNA(Gly) + AMP + diphosphate. The protein is Glycine--tRNA ligase alpha subunit of Trichormus variabilis (strain ATCC 29413 / PCC 7937) (Anabaena variabilis).